The chain runs to 100 residues: Urease subunit gamma (100 aa).

Belongs to the urease gamma subunit family. Heterotrimer of UreA (gamma), UreB (beta) and UreC (alpha) subunits. Three heterotrimers associate to form the active enzyme.

Its subcellular location is the cytoplasm. The catalysed reaction is urea + 2 H2O + H(+) = hydrogencarbonate + 2 NH4(+). It functions in the pathway nitrogen metabolism; urea degradation; CO(2) and NH(3) from urea (urease route): step 1/1. This chain is Urease subunit gamma, found in Cupriavidus metallidurans (strain ATCC 43123 / DSM 2839 / NBRC 102507 / CH34) (Ralstonia metallidurans).